The chain runs to 535 residues: Putative cysteine ligase BshC (535 aa).

A coiled-coil region spans residues 420-477 (DTFKALKESINSAYKNLQEKLAPLGADFQKLTGENLGRVMAQVKYLEERAQKYHREKN).

It belongs to the BshC family.

Functionally, involved in bacillithiol (BSH) biosynthesis. May catalyze the last step of the pathway, the addition of cysteine to glucosamine malate (GlcN-Mal) to generate BSH. This is Putative cysteine ligase BshC from Carboxydothermus hydrogenoformans (strain ATCC BAA-161 / DSM 6008 / Z-2901).